The primary structure comprises 600 residues: Aspartate--tRNA(Asp/Asn) ligase (600 aa).

Residue E187 coordinates L-aspartate. The segment at Q211–K214 is aspartate. L-aspartate contacts are provided by R233 and H463. R233–E235 contacts ATP. E497 serves as a coordination point for ATP. R504 contacts L-aspartate. G549 to R552 contacts ATP.

This sequence belongs to the class-II aminoacyl-tRNA synthetase family. Type 1 subfamily. As to quaternary structure, homodimer.

The protein localises to the cytoplasm. The enzyme catalyses tRNA(Asx) + L-aspartate + ATP = L-aspartyl-tRNA(Asx) + AMP + diphosphate. Aspartyl-tRNA synthetase with relaxed tRNA specificity since it is able to aspartylate not only its cognate tRNA(Asp) but also tRNA(Asn). Reaction proceeds in two steps: L-aspartate is first activated by ATP to form Asp-AMP and then transferred to the acceptor end of tRNA(Asp/Asn). The chain is Aspartate--tRNA(Asp/Asn) ligase from Wolbachia pipientis wMel.